The primary structure comprises 308 residues: Eugenol synthase 1 (308 aa).

NADP(+) contacts are provided by residues 13 to 16 (TGYI), 35 to 45 (VRESTVSDPAK), R36, 86 to 88 (QMQ), 111 to 113 (SEF), K133, and 153 to 155 (NCF). The active-site Proton donor/acceptor is the K133.

This sequence belongs to the NmrA-type oxidoreductase family. As to expression, in flowers, mostly expressed in limbs, and, to a lower extent, in tubes.

The enzyme catalyses eugenol + a carboxylate + NADP(+) = a coniferyl ester + NADPH. It catalyses the reaction eugenol + acetate + NADP(+) = (E)-coniferyl acetate + NADPH. The protein operates within aromatic compound metabolism; phenylpropanoid biosynthesis. Functionally, involved in the biosynthesis of the floral volatile eugenol. Catalyzes the synthesis of the phenylpropene eugenol from coniferyl acetate. Phenylpropenes are produced by plants as defense compounds with antimicrobial and antianimal properties, or as floral attractants of pollinators. In Petunia hybrida (Petunia), this protein is Eugenol synthase 1.